The chain runs to 296 residues: Cholesterol ring-cleaving hydrolase IpdA subunit (296 aa).

Belongs to the 3-oxoacid CoA-transferase subunit A family. In terms of assembly, heterotetramer composed of 2 IpdA subunits and 2 IpdB subunits.

It carries out the reaction (3E)-2-(2-carboxylatoethyl)-3-methyl-6-oxocyclohex-1-ene-1-carboxyl-CoA + H2O = 6-methyl-3,7-dioxodecanedioyl-CoA. The protein operates within steroid metabolism; cholesterol degradation. Involved in the final steps of cholesterol and steroid degradation. Opens the last steroid ring of cholesterol by catalyzing the hydrolysis of (3E)-2-(2-carboxylatoethyl)-3-methyl-6-oxocyclohex-1-ene-1-carboxyl-CoA (COCHEA-CoA) to 6-methyl-3,7-dioxodecanedioyl-CoA (MeDODA-CoA). The polypeptide is Cholesterol ring-cleaving hydrolase IpdA subunit (Rhodococcus jostii (strain RHA1)).